The following is a 166-amino-acid chain: MANVRPSVVFKQQEVDHMADILKNSKSFIVFEYHGLTAANILALRNVLHSSNSKLFVLKNNITARAFEKAGVTGFEDRLTGPNAIAVAMDDEIAAIKAVNDVAKEFDFVKIKGAYLENKFADTHKIDQLAAIPGREGLYSMLLSCFTAPLRNVLYGLKAVAEQKGE.

Belongs to the universal ribosomal protein uL10 family. As to quaternary structure, part of the ribosomal stalk of the 50S ribosomal subunit. The N-terminus interacts with L11 and the large rRNA to form the base of the stalk. The C-terminus forms an elongated spine to which L12 dimers bind in a sequential fashion forming a multimeric L10(L12)X complex.

In terms of biological role, forms part of the ribosomal stalk, playing a central role in the interaction of the ribosome with GTP-bound translation factors. In Ureaplasma urealyticum serovar 10 (strain ATCC 33699 / Western), this protein is Large ribosomal subunit protein uL10.